Here is a 215-residue protein sequence, read N- to C-terminus: Large ribosomal subunit protein bL25 (215 aa).

Over residues 192 to 203 (EEATEEEEEAAE) the composition is skewed to acidic residues. The interval 192–215 (EEATEEEEEAAEPEVIKRKEEEEE) is disordered. The segment covering 205–215 (EVIKRKEEEEE) has biased composition (basic and acidic residues).

The protein belongs to the bacterial ribosomal protein bL25 family. CTC subfamily. Part of the 50S ribosomal subunit; part of the 5S rRNA/L5/L18/L25 subcomplex. Contacts the 5S rRNA. Binds to the 5S rRNA independently of L5 and L18.

This is one of the proteins that binds to the 5S RNA in the ribosome where it forms part of the central protuberance. This is Large ribosomal subunit protein bL25 from Thermotoga sp. (strain RQ2).